Consider the following 145-residue polypeptide: D-aminoacyl-tRNA deacylase (145 aa).

Positions 137-138 (GP) match the Gly-cisPro motif, important for rejection of L-amino acids motif.

The protein belongs to the DTD family. In terms of assembly, homodimer.

The protein localises to the cytoplasm. It carries out the reaction glycyl-tRNA(Ala) + H2O = tRNA(Ala) + glycine + H(+). The enzyme catalyses a D-aminoacyl-tRNA + H2O = a tRNA + a D-alpha-amino acid + H(+). In terms of biological role, an aminoacyl-tRNA editing enzyme that deacylates mischarged D-aminoacyl-tRNAs. Also deacylates mischarged glycyl-tRNA(Ala), protecting cells against glycine mischarging by AlaRS. Acts via tRNA-based rather than protein-based catalysis; rejects L-amino acids rather than detecting D-amino acids in the active site. By recycling D-aminoacyl-tRNA to D-amino acids and free tRNA molecules, this enzyme counteracts the toxicity associated with the formation of D-aminoacyl-tRNA entities in vivo and helps enforce protein L-homochirality. This chain is D-aminoacyl-tRNA deacylase, found in Ruegeria pomeroyi (strain ATCC 700808 / DSM 15171 / DSS-3) (Silicibacter pomeroyi).